The following is a 318-amino-acid chain: Galactofuranose-binding protein YtfQ (318 aa).

Positions 1 to 21 (MWKRLLIVSAVSAAMSSMALA) are cleaved as a signal peptide. Beta-D-galactofuranose is bound by residues 34-38 (ESGWR), 111-112 (DR), R167, N220, and D248. An intrachain disulfide couples C150 to C214.

Belongs to the bacterial solute-binding protein 2 family. The complex is composed of two ATP-binding proteins (YtfR), two transmembrane proteins (YtfT and YjfF) and a solute-binding protein (YtfQ).

It localises to the periplasm. Part of the ABC transporter complex YtfQRT-YjfF involved in galactofuranose transport. Binds to both alpha- and beta-galactofuranose. In Escherichia coli (strain K12), this protein is Galactofuranose-binding protein YtfQ (ytfQ).